A 286-amino-acid polypeptide reads, in one-letter code: Bark leucoagglutinin (286 aa).

The N-terminal stretch at 1–28 (ATSNSKPTQVLLATFLTFFFLLLNNVNS) is a signal peptide. N-acetyl-alpha-neuraminyl-(2-&gt;3)-beta-D-galactosyl-(1-&gt;4)-beta-D-glucose is bound at residue Y73. N-linked (GlcNAc...) asparagine glycosylation occurs at N89. Positions 115 and 135 each coordinate N-acetyl-alpha-neuraminyl-(2-&gt;3)-beta-D-galactosyl-(1-&gt;4)-beta-D-glucose. N-linked (GlcNAc...) asparagine glycosylation is present at N141. Positions 155 and 157 each coordinate Mn(2+). The Ca(2+) site is built by D157, Y159, D165, and D168. Residues Y159 and D165 each contribute to the N-acetyl-alpha-neuraminyl-(2-&gt;3)-beta-D-galactosyl-(1-&gt;4)-beta-D-glucose site. Mn(2+)-binding residues include D168 and H173. Residues N207 and N219 are each glycosylated (N-linked (GlcNAc...) asparagine). The propeptide at 278–286 (NVHIARYTA) is removed in mature form.

Belongs to the leguminous lectin family.

In terms of biological role, sialic acid-binding lectin specifically recognizing the trisaccharide sequence Neu5Ac/Gc-alpha-2,3-Gal-beta-1,4-GlcNAc/Glc. This Maackia amurensis (Amur maackia) protein is Bark leucoagglutinin.